The primary structure comprises 532 residues: MEELSSVGEQVFAAECILSKRLRKGKLEYLVKWRGWSSKHNSWEPEENILDPRLLLAFQKKEHEKEVQNRKRGKRPRGRPRKLTAMSSCSRRSKLKEPDAPSKSKSSSSSSSSTSSSSSSDEEDDSDLDAKRGPRGRETHPVPQKKAQILVAKPELKDPIRKKRGRKPLPPEQKATRRPVSLAKVLKTARKDLGAPASKLPPPLSAPVAGLAALKAHAKEACGGPSAMATPENLASLMKGMASSPGRGGISWQSSIVHYMNRMTQSQAQAASRLALKAQATNKCGLGLDLKVRTQKGELGMSPPGSKIPKAPSGGAVEQKVGNTGGPPHTHGASRVPAGCPGPQPAPTQELSLQVLDLQSVKNGMPGVGLLARHATATKGVPATNPAPGKGTGSGLIGASGATMPTDTSKSEKLASRAVAPPTPASKRDCVKGSATPSGQESRTAPGEARKAATLPEMSAGEESSSSDSDPDSASPPSTGQNPSVSVQTSQDWKPTRSLIEHVFVTDVTANLITVTVKESPTSVGFFNLRHY.

Positions 1-66 (MEELSSVGEQ…AFQKKEHEKE (66 aa)) are involved in the interaction with H3C15 and H3C1. A Chromo domain is found at 12-70 (FAAECILSKRLRKGKLEYLVKWRGWSSKHNSWEPEENILDPRLLLAFQKKEHEKEVQNR). Residues 60–69 (KKEHEKEVQN) are compositionally biased toward basic and acidic residues. Positions 60 to 204 (KKEHEKEVQN…APASKLPPPL (145 aa)) are disordered. Residues 70-82 (RKRGKRPRGRPRK) are compositionally biased toward basic residues. A DNA-binding region (a.T hook) is located at residues 75–87 (RPRGRPRKLTAMS). The span at 103–119 (KSKSSSSSSSSTSSSSS) shows a compositional bias: low complexity. The span at 128–140 (LDAKRGPRGRETH) shows a compositional bias: basic and acidic residues. Glycyl lysine isopeptide (Lys-Gly) (interchain with G-Cter in SUMO2) cross-links involve residues K146 and K153. The Nuclear localization signal motif lies at 163–168 (KRGRKP). R247 carries the post-translational modification Asymmetric dimethylarginine; alternate. R247 is subject to Omega-N-methylarginine; alternate. Disordered regions lie at residues 296–348 (KGEL…PAPT) and 379–493 (KGVP…SQDW). Phosphoserine is present on S302. The span at 464–478 (SSSSDSDPDSASPPS) shows a compositional bias: low complexity. Residues 479-493 (TGQNPSVSVQTSQDW) are compositionally biased toward polar residues.

In terms of assembly, component of a PRC1-like complex. The composition of the PRC1 complex may differ between the PRC1 complex in pluripotent embryonic stem cells containing RNF2, CBX7 and PCGF2, and the PRC1 complex in differentiating cells containing RNF2, CBX2, CBX4 and BMI1. May interact with H3C15, H3C1 and RNF2. Interacts (via chromodomain) with histone H3K9Me3 and H3K27me3.

It localises to the nucleus. Its subcellular location is the chromosome. Functionally, component of a Polycomb group (PcG) multiprotein PRC1-like complex, a complex class required to maintain the transcriptionally repressive state of many genes, including Hox genes, throughout development. PcG PRC1 complex acts via chromatin remodeling and modification of histones; it mediates monoubiquitination of histone H2A 'Lys-119', rendering chromatin heritably changed in its expressibility. Binds to histone H3 trimethylated at 'Lys-9' (H3K9me3) or at 'Lys-27' (H3K27me3). Plays a role in the lineage differentiation of the germ layers in embryonic development. Involved in sexual development, acting as activator of NR5A1 expression. The polypeptide is Chromobox protein homolog 2 (CBX2) (Homo sapiens (Human)).